A 258-amino-acid chain; its full sequence is Phosphate import ATP-binding protein PstB (258 aa).

The ABC transporter domain occupies 12–253; the sequence is IEVKNLNFYY…PARKETEDYI (242 aa). Residue 44-51 participates in ATP binding; sequence GPSGCGKS.

Belongs to the ABC transporter superfamily. Phosphate importer (TC 3.A.1.7) family. In terms of assembly, the complex is composed of two ATP-binding proteins (PstB), two transmembrane proteins (PstC and PstA) and a solute-binding protein (PstS).

It localises to the cell inner membrane. It catalyses the reaction phosphate(out) + ATP + H2O = ADP + 2 phosphate(in) + H(+). Functionally, part of the ABC transporter complex PstSACB involved in phosphate import. Responsible for energy coupling to the transport system. The chain is Phosphate import ATP-binding protein PstB from Bordetella avium (strain 197N).